The primary structure comprises 427 residues: Glutamate-1-semialdehyde 2,1-aminomutase (427 aa).

Lys264 carries the N6-(pyridoxal phosphate)lysine modification.

This sequence belongs to the class-III pyridoxal-phosphate-dependent aminotransferase family. HemL subfamily. Homodimer. Pyridoxal 5'-phosphate serves as cofactor.

Its subcellular location is the cytoplasm. It catalyses the reaction (S)-4-amino-5-oxopentanoate = 5-aminolevulinate. It participates in porphyrin-containing compound metabolism; protoporphyrin-IX biosynthesis; 5-aminolevulinate from L-glutamyl-tRNA(Glu): step 2/2. The polypeptide is Glutamate-1-semialdehyde 2,1-aminomutase (Clostridium botulinum (strain Eklund 17B / Type B)).